The chain runs to 276 residues: Probable ABC transporter permease protein NosY (276 aa).

6 helical membrane passes run 20-40 (WLLA…WLGA), 55-75 (IASL…LLAY), 111-131 (ILAL…ALLV), 146-166 (FMIS…VLSG), 179-199 (LGVW…LLVL), and 251-271 (VLWL…YAIF).

As to quaternary structure, the complex may be composed of an ATP-binding protein (NosF), a transmembrane protein (NosY) and a solute-binding protein (NosD).

The protein localises to the cell inner membrane. Its function is as follows. Required for the assembly of the copper chromophores of nitrous oxide reductase. Could be part of the ABC transporter complex NosDFY. The chain is Probable ABC transporter permease protein NosY from Stutzerimonas stutzeri (Pseudomonas stutzeri).